Reading from the N-terminus, the 487-residue chain is WD-40 repeat-containing protein MSI5 (487 aa).

An N-acetylmethionine modification is found at Met1. Positions 1–12 (MESEAAATVQAT) are enriched in low complexity. Residues 1 to 44 (MESEAAATVQATRPRRAPRTPVTAILTDKRRRKPKSNNESQLPF) are disordered. Residues 14–21 (PRRAPRTP) carry the Nuclear localization signal motif. WD repeat units follow at residues 142–182 (IHPG…DRYA), 197–237 (GHQD…TMAG), 270–310 (GHKD…SPAM), 315–355 (AHDA…SNGV), 364–404 (GHRA…KKSE), and 419–466 (GHRD…YRPE). The segment at 236 to 268 (AGSDSKSPGSSFKQTGEGSDKTGGPSVGPRGIY) is disordered. Residues 237–252 (GSDSKSPGSSFKQTGE) are compositionally biased toward polar residues. A DWD box motif is present at residues 288-303 (FCSVGDDSCLMLWDAR).

This sequence belongs to the WD repeat RBAP46/RBAP48/MSI1 family. As to quaternary structure, interacts with AHL16. Interacts with LHP1, PDP2, PDP3 and PDP6. Component of the PRC2 (polycomb repressive complex 2) complex which regulates histone methylation on histone H3K27.

It localises to the nucleus. Functionally, core histone-binding subunit that may target chromatin assembly factors, chromatin remodeling factors and histone deacetylases to their histone substrates in a manner that is regulated by nucleosomal DNA. Acts together with PDP1 and MSI4/FVE to regulate the function of the PRC2 complex on FLC. This chain is WD-40 repeat-containing protein MSI5, found in Arabidopsis thaliana (Mouse-ear cress).